Reading from the N-terminus, the 175-residue chain is Large ribosomal subunit protein uL10 (175 aa).

Belongs to the universal ribosomal protein uL10 family. Part of the ribosomal stalk of the 50S ribosomal subunit. The N-terminus interacts with L11 and the large rRNA to form the base of the stalk. The C-terminus forms an elongated spine to which L12 dimers bind in a sequential fashion forming a multimeric L10(L12)X complex.

Forms part of the ribosomal stalk, playing a central role in the interaction of the ribosome with GTP-bound translation factors. The polypeptide is Large ribosomal subunit protein uL10 (Synechococcus elongatus (strain ATCC 33912 / PCC 7942 / FACHB-805) (Anacystis nidulans R2)).